The chain runs to 109 residues: Nucleoid-associated protein LGAS_0369 (109 aa).

The protein belongs to the YbaB/EbfC family. Homodimer.

It is found in the cytoplasm. The protein resides in the nucleoid. In terms of biological role, binds to DNA and alters its conformation. May be involved in regulation of gene expression, nucleoid organization and DNA protection. The polypeptide is Nucleoid-associated protein LGAS_0369 (Lactobacillus gasseri (strain ATCC 33323 / DSM 20243 / BCRC 14619 / CIP 102991 / JCM 1131 / KCTC 3163 / NCIMB 11718 / NCTC 13722 / AM63)).